Here is a 779-residue protein sequence, read N- to C-terminus: Putative helicase V13 (779 aa).

The SF3 helicase domain maps to Asp477 to Lys642. Gly504–Ser511 contacts ATP.

This Acanthamoeba polyphaga (Amoeba) protein is Putative helicase V13.